We begin with the raw amino-acid sequence, 298 residues long: ATP synthase gamma chain (298 aa).

This sequence belongs to the ATPase gamma chain family. In terms of assembly, F-type ATPases have 2 components, CF(1) - the catalytic core - and CF(0) - the membrane proton channel. CF(1) has five subunits: alpha(3), beta(3), gamma(1), delta(1), epsilon(1). CF(0) has three main subunits: a, b and c.

Its subcellular location is the cell inner membrane. Its function is as follows. Produces ATP from ADP in the presence of a proton gradient across the membrane. The gamma chain is believed to be important in regulating ATPase activity and the flow of protons through the CF(0) complex. This chain is ATP synthase gamma chain, found in Francisella philomiragia subsp. philomiragia (strain ATCC 25017 / CCUG 19701 / FSC 153 / O#319-036).